The sequence spans 439 residues: ATP-dependent RNA helicase RhlB (439 aa).

A Q motif motif is present at residues 9 to 37; it reads QKFADLPLHPEVKQALAENGFEFCTPIQA. The region spanning 40–219 is the Helicase ATP-binding domain; that stretch reads LPVLLQSKDI…YDHMNDPVKV (180 aa). Position 53–60 (53–60) interacts with ATP; sequence AQTGTGKT. The DEAD box motif lies at 165 to 168; the sequence is DEAD. One can recognise a Helicase C-terminal domain in the interval 243–390; that stretch reads KIRLLLTLIE…VSNYDRDALL (148 aa). Residues 395 to 439 are disordered; that stretch reads PPVKIHRKHPAGARNLRERSGAGRPQGAHRSGGRPPRHDRTRRQP. A compositionally biased stretch (basic residues) spans 425-439; the sequence is SGGRPPRHDRTRRQP.

Belongs to the DEAD box helicase family. RhlB subfamily. Component of the RNA degradosome, which is a multiprotein complex involved in RNA processing and mRNA degradation.

The protein resides in the cytoplasm. The catalysed reaction is ATP + H2O = ADP + phosphate + H(+). Functionally, DEAD-box RNA helicase involved in RNA degradation. Has RNA-dependent ATPase activity and unwinds double-stranded RNA. The chain is ATP-dependent RNA helicase RhlB from Shewanella sp. (strain MR-4).